A 148-amino-acid polypeptide reads, in one-letter code: uncharacterized protein (148 aa).

Belongs to the IIV-6 395R family.

This is an uncharacterized protein from Aedes vexans (Inland floodwater mosquito).